Here is a 693-residue protein sequence, read N- to C-terminus: Elongation factor G (693 aa).

In terms of domain architecture, tr-type G spans 8-282 (EKTRNIGIMA…AVIDYLPSPL (275 aa)). GTP is bound by residues 17–24 (AHVDAGKT), 81–85 (DTPGH), and 135–138 (NKMD).

The protein belongs to the TRAFAC class translation factor GTPase superfamily. Classic translation factor GTPase family. EF-G/EF-2 subfamily.

The protein localises to the cytoplasm. Its function is as follows. Catalyzes the GTP-dependent ribosomal translocation step during translation elongation. During this step, the ribosome changes from the pre-translocational (PRE) to the post-translocational (POST) state as the newly formed A-site-bound peptidyl-tRNA and P-site-bound deacylated tRNA move to the P and E sites, respectively. Catalyzes the coordinated movement of the two tRNA molecules, the mRNA and conformational changes in the ribosome. This Streptococcus pneumoniae serotype 2 (strain D39 / NCTC 7466) protein is Elongation factor G.